The following is a 367-amino-acid chain: Uroporphyrinogen decarboxylase (367 aa).

Position 1 is an N-acetylmethionine (Met1). Residues Arg37, Ala39, Arg41, Arg50, Asp86, Tyr164, Ser219, and His339 each coordinate coproporphyrinogen I. Arg37, Ala39, and Arg41 together coordinate coproporphyrinogen III. The coproporphyrinogen III site is built by Asp86, Tyr164, Ser219, and His339.

This sequence belongs to the uroporphyrinogen decarboxylase family. Homodimer.

It is found in the cytoplasm. It localises to the cytosol. It carries out the reaction uroporphyrinogen III + 4 H(+) = coproporphyrinogen III + 4 CO2. The catalysed reaction is uroporphyrinogen I + 4 H(+) = coproporphyrinogen I + 4 CO2. It participates in porphyrin-containing compound metabolism; protoporphyrin-IX biosynthesis; coproporphyrinogen-III from 5-aminolevulinate: step 4/4. Catalyzes the sequential decarboxylation of the four acetate side chains of uroporphyrinogen to form coproporphyrinogen and participates in the fifth step in the heme biosynthetic pathway. Isomer I or isomer III of uroporphyrinogen may serve as substrate, but only coproporphyrinogen III can ultimately be converted to heme. In vitro also decarboxylates pentacarboxylate porphyrinogen I. In Homo sapiens (Human), this protein is Uroporphyrinogen decarboxylase.